A 295-amino-acid polypeptide reads, in one-letter code: MWFKRIGLFLLTNILVVVTISIVTSVLGIGPYLDANGINLSSLLVFCFLWGMGGAFVSLLLSKFMAKMMMGVQVIDPRSASGAERELYSRVERLARTANLPMPEVGIYHSPEVNAFATGPSKSSSLVAVSSGLLQTMDNAEVEGVLAHELAHVANGDMVTMTLIQGVVNAFVMFFSRIISYALSTMVKDELQYTVRLIANIVLSILFSILGSIIVAYFSRTREYRADAGGAKLAGRQNMIAALEKLKRTFDAPEDERGREALATMKISGHNKWMALFSTHPPLEARIAALKNSGY.

The next 2 membrane-spanning stretches (helical) occupy residues 6–26 (IGLFLLTNILVVVTISIVTSV) and 40–60 (LSSLLVFCFLWGMGGAFVSLL). His148 is a Zn(2+) binding site. The active site involves Glu149. A Zn(2+)-binding site is contributed by His152. Helical transmembrane passes span 163-183 (LIQGVVNAFVMFFSRIISYAL) and 198-218 (IANIVLSILFSILGSIIVAYF). Glu223 is a Zn(2+) binding site.

The protein belongs to the peptidase M48B family. Requires Zn(2+) as cofactor.

It is found in the cell inner membrane. The chain is Protease HtpX homolog from Leptospira interrogans serogroup Icterohaemorrhagiae serovar copenhageni (strain Fiocruz L1-130).